Here is a 97-residue protein sequence, read N- to C-terminus: Putative septation protein SpoVG (97 aa).

The protein belongs to the SpoVG family.

Could be involved in septation. The protein is Putative septation protein SpoVG of Borrelia garinii subsp. bavariensis (strain ATCC BAA-2496 / DSM 23469 / PBi) (Borreliella bavariensis).